Reading from the N-terminus, the 110-residue chain is V-type proton ATPase subunit F (110 aa).

The protein belongs to the V-ATPase F subunit family. In terms of assembly, V-ATPase is a heteromultimeric enzyme made up of two complexes: the ATP-hydrolytic V1 complex and the proton translocation V0 complex. The V1 complex consists of three catalytic AB heterodimers that form a heterohexamer, three peripheral stalks each consisting of EG heterodimers, one central rotor including subunits D and F, and the regulatory subunits C and H. The proton translocation complex V0 consists of the proton transport subunit a, a ring of proteolipid subunits c9c'', rotary subunit d, subunits e and f, and two accessory subunits.

Its function is as follows. Subunit of the V1 complex of vacuolar(H+)-ATPase (V-ATPase), a multisubunit enzyme composed of a peripheral complex (V1) that hydrolyzes ATP and a membrane integral complex (V0) that translocates protons. V-ATPase is responsible for acidifying and maintaining the pH of intracellular compartments and in some cell types, is targeted to the plasma membrane, where it is responsible for acidifying the extracellular environment. This Xenopus laevis (African clawed frog) protein is V-type proton ATPase subunit F (atp6s14).